The following is a 335-amino-acid chain: Ketol-acid reductoisomerase (NADP(+)) 2 (335 aa).

Residues M1–T180 form the KARI N-terminal Rossmann domain. NADP(+)-binding positions include Y24–Q27, R47, S51, and D81–Q84. The active site involves H106. G132 provides a ligand contact to NADP(+). Positions T181–I326 constitute a KARI C-terminal knotted domain. D189, E193, E225, and E229 together coordinate Mg(2+). S250 lines the substrate pocket.

Belongs to the ketol-acid reductoisomerase family. The cofactor is Mg(2+).

The enzyme catalyses (2R)-2,3-dihydroxy-3-methylbutanoate + NADP(+) = (2S)-2-acetolactate + NADPH + H(+). It catalyses the reaction (2R,3R)-2,3-dihydroxy-3-methylpentanoate + NADP(+) = (S)-2-ethyl-2-hydroxy-3-oxobutanoate + NADPH + H(+). The protein operates within amino-acid biosynthesis; L-isoleucine biosynthesis; L-isoleucine from 2-oxobutanoate: step 2/4. It participates in amino-acid biosynthesis; L-valine biosynthesis; L-valine from pyruvate: step 2/4. In terms of biological role, involved in the biosynthesis of branched-chain amino acids (BCAA). Catalyzes an alkyl-migration followed by a ketol-acid reduction of (S)-2-acetolactate (S2AL) to yield (R)-2,3-dihydroxy-isovalerate. In the isomerase reaction, S2AL is rearranged via a Mg-dependent methyl migration to produce 3-hydroxy-3-methyl-2-ketobutyrate (HMKB). In the reductase reaction, this 2-ketoacid undergoes a metal-dependent reduction by NADPH to yield (R)-2,3-dihydroxy-isovalerate. This is Ketol-acid reductoisomerase (NADP(+)) 2 from Bacillus cereus (strain ZK / E33L).